We begin with the raw amino-acid sequence, 387 residues long: Killer cell lectin-like receptor subfamily G member 2 (387 aa).

Residues 1 to 105 are disordered; it reads MEPPQVPAEA…SGEPAPASWA (105 aa). A compositionally biased stretch (basic and acidic residues) spans 15–27; sequence ASEDSPRPERTGW. Serine 143 bears the Phosphoserine mark. The segment at 155–174 is disordered; the sequence is QWLPRAPSPGSTWSRGSPLA. Residues 241-261 form a helical membrane-spanning segment; it reads WALVVMAVLLAVCTVAVVALA. One can recognise a C-type lectin domain in the interval 278-383; the sequence is SQEQCYYLSE…CSSPRPWVCA (106 aa). 2 disulfides stabilise this stretch: cysteine 299–cysteine 382 and cysteine 361–cysteine 374.

It localises to the membrane. The chain is Killer cell lectin-like receptor subfamily G member 2 (Klrg2) from Mus musculus (Mouse).